The following is a 609-amino-acid chain: Snake venom metalloproteinase-disintegrin-like mocarhagin (609 aa).

The N-terminal stretch at 1 to 20 (MIQALLVAICLAVFPYQGSS) is a signal peptide. A propeptide spanning residues 21–191 (IILESGNVND…DEPIEKSSQL (171 aa)) is cleaved from the precursor. Positions 205–400 (KYIEFYVVVD…DRPQCILNKP (196 aa)) constitute a Peptidase M12B domain. Glutamate 208 and aspartate 292 together coordinate Ca(2+). A glycan (N-linked (GlcNAc...) asparagine) is linked at asparagine 303. Cystine bridges form between cysteine 316-cysteine 395, cysteine 356-cysteine 379, and cysteine 358-cysteine 363. Residues histidine 341 and histidine 345 each coordinate Zn(2+). Residues cysteine 395, asparagine 398, valine 410, asparagine 413, phenylalanine 415, glutamate 417, glutamate 420, and aspartate 423 each contribute to the Ca(2+) site. Residues 408-494 (PPVCGNYFVE…KCPKDSFQRN (87 aa)) form the Disintegrin domain. Disulfide bonds link cysteine 411–cysteine 440, cysteine 422–cysteine 435, cysteine 424–cysteine 430, cysteine 434–cysteine 457, cysteine 448–cysteine 454, cysteine 453–cysteine 479, cysteine 466–cysteine 486, cysteine 473–cysteine 505, cysteine 498–cysteine 510, cysteine 517–cysteine 567, cysteine 532–cysteine 575, cysteine 545–cysteine 555, cysteine 562–cysteine 601, and cysteine 595–cysteine 606. The D/ECD-tripeptide motif lies at 472–474 (DCD). Asparagine 507 carries an N-linked (GlcNAc...) asparagine glycan.

The protein belongs to the venom metalloproteinase (M12B) family. P-III subfamily. P-IIIa sub-subfamily. In terms of assembly, monomer. The cofactor is Zn(2+). As to expression, expressed by the venom gland.

The protein localises to the secreted. With respect to regulation, inhibited by EDTA and diisopropyl fluorophosphate (DFP). Also inhibited by an excess of zinc or calcium ions. In terms of biological role, snake venom zinc metalloproteinase that inhibits platelet aggregation by cleaving platelet glycoprotein Ib alpha (GP1BA) at Glu-298/Asp-299, and abolishes binding of von Willebrand factor (VWF) to GPIBA. Cleaves P-selectin glycoprotein ligand-1 (PSGL-1/SELPLG) at Tyr-51/Asp-52, and completely abolishes the binding of PSGL-1 to P-selectin. Anionic amino acid sequences containing sulfated tyrosines are needed for cleavages. Inhibits the thrombin-induced platelet aggregation, and the thrombin-induced release of ATP and ADP. Has lectin activity (inhibited by heparin). The sequence is that of Snake venom metalloproteinase-disintegrin-like mocarhagin from Naja mossambica (Mozambique spitting cobra).